Consider the following 205-residue polypeptide: Protein TK0174 (205 aa).

Residues 7 to 201 (EWGEFLVRLA…EEYPRGPVRR (195 aa)) enclose the AMMECR1 domain.

In Thermococcus kodakarensis (strain ATCC BAA-918 / JCM 12380 / KOD1) (Pyrococcus kodakaraensis (strain KOD1)), this protein is Protein TK0174.